Here is a 743-residue protein sequence, read N- to C-terminus: Catalase-peroxidase (743 aa).

A disordered region spans residues 1-29 (MNAESGENAGGGCPLGHGAGAPRKRPSNR). The span at 8 to 19 (NAGGGCPLGHGA) shows a compositional bias: gly residues. The segment at residues 100-222 (WHSAGTYRIT…LGAVQMGLIY (123 aa)) is a cross-link (tryptophyl-tyrosyl-methioninium (Trp-Tyr) (with M-248)). Residue His101 is the Proton acceptor of the active site. Residues 222–248 (YVNPEGPNGNPDPKAAAVDIRETFARM) constitute a cross-link (tryptophyl-tyrosyl-methioninium (Tyr-Met) (with W-100)). His263 provides a ligand contact to heme b.

The protein belongs to the peroxidase family. Peroxidase/catalase subfamily. As to quaternary structure, homodimer or homotetramer. Requires heme b as cofactor. Formation of the three residue Trp-Tyr-Met cross-link is important for the catalase, but not the peroxidase activity of the enzyme.

It catalyses the reaction H2O2 + AH2 = A + 2 H2O. The catalysed reaction is 2 H2O2 = O2 + 2 H2O. In terms of biological role, bifunctional enzyme with both catalase and broad-spectrum peroxidase activity. The sequence is that of Catalase-peroxidase from Stutzerimonas stutzeri (strain A1501) (Pseudomonas stutzeri).